The chain runs to 300 residues: RNA polymerase sigma factor RpoH (300 aa).

Residues 53-122 are sigma-70 factor domain-2; that stretch reads LVTSHLRLVA…IQEYILRSWS (70 aa). Positions 77-80 match the Interaction with polymerase core subunit RpoC motif; that stretch reads EVVS. Residues 231-282 are sigma-70 factor domain-4; sequence AMGVLNDRERRIFEARRLAEDPVTLEELSSEFDISRERVRQIEVRAFEKVQE. The segment at residues 255–274 is a DNA-binding region (H-T-H motif); that stretch reads LEELSSEFDISRERVRQIEV.

The protein belongs to the sigma-70 factor family. RpoH subfamily. Interacts with the RNA polymerase core enzyme.

The protein resides in the cytoplasm. In terms of biological role, sigma factors are initiation factors that promote the attachment of RNA polymerase to specific initiation sites and are then released. This sigma factor is involved in regulation of expression of heat shock genes. This Rhizobium radiobacter (Agrobacterium tumefaciens) protein is RNA polymerase sigma factor RpoH.